Here is a 225-residue protein sequence, read N- to C-terminus: ATP synthase subunit a (225 aa).

Helical transmembrane passes span Leu-18–Leu-38, Ile-73–Ile-93, Met-100–Ile-120, Met-126–Ile-146, Gly-156–Leu-176, and Ile-187–Met-207.

This sequence belongs to the ATPase A chain family. F-type ATPases have 2 components, CF(1) - the catalytic core - and CF(0) - the membrane proton channel. CF(1) has five subunits: alpha(3), beta(3), gamma(1), delta(1), epsilon(1). CF(0) has three main subunits: a, b and c.

It localises to the mitochondrion inner membrane. Functionally, mitochondrial membrane ATP synthase (F(1)F(0) ATP synthase or Complex V) produces ATP from ADP in the presence of a proton gradient across the membrane which is generated by electron transport complexes of the respiratory chain. F-type ATPases consist of two structural domains, F(1) - containing the extramembraneous catalytic core and F(0) - containing the membrane proton channel, linked together by a central stalk and a peripheral stalk. During catalysis, ATP synthesis in the catalytic domain of F(1) is coupled via a rotary mechanism of the central stalk subunits to proton translocation. Key component of the proton channel; it may play a direct role in the translocation of protons across the membrane. In Locusta migratoria (Migratory locust), this protein is ATP synthase subunit a (ATP6).